The sequence spans 274 residues: Nitrogenase iron protein (274 aa).

8–15 (GKGGIGKS) lines the ATP pocket. Residue Cys-94 coordinates [4Fe-4S] cluster. Arg-97 is modified (ADP-ribosylarginine; by dinitrogenase reductase ADP-ribosyltransferase). Cys-131 provides a ligand contact to [4Fe-4S] cluster.

The protein belongs to the NifH/BchL/ChlL family. As to quaternary structure, homodimer. The cofactor is [4Fe-4S] cluster. In terms of processing, the reversible ADP-ribosylation of Arg-97 inactivates the nitrogenase reductase and regulates nitrogenase activity.

It catalyses the reaction N2 + 8 reduced [2Fe-2S]-[ferredoxin] + 16 ATP + 16 H2O = H2 + 8 oxidized [2Fe-2S]-[ferredoxin] + 2 NH4(+) + 16 ADP + 16 phosphate + 6 H(+). The key enzymatic reactions in nitrogen fixation are catalyzed by the nitrogenase complex, which has 2 components: the iron protein and the molybdenum-iron protein. The polypeptide is Nitrogenase iron protein (Desulfatibacillum aliphaticivorans).